The chain runs to 344 residues: L-sulfolactate dehydrogenase (344 aa).

The protein belongs to the LDH2/MDH2 oxidoreductase family.

Its subcellular location is the cytoplasm. The enzyme catalyses a (2S)-2-hydroxycarboxylate + NAD(+) = a 2-oxocarboxylate + NADH + H(+). Its pathway is cofactor biosynthesis; coenzyme M biosynthesis; sulfoacetaldehyde from phosphoenolpyruvate and sulfite: step 3/4. It functions in the pathway cofactor biosynthesis; 5,6,7,8-tetrahydromethanopterin biosynthesis. Catalyzes the reduction of sulfopyruvate to (R)-sulfolactate much more efficiently than the reverse reaction. Also catalyzes the reduction of oxaloacetate, alpha-ketoglutarate, and to a much lower extent, KHTCA, but not pyruvate. Involved in the biosynthesis of both coenzyme M (with (R)-sulfolactate) and methanopterin (with alpha-ketoglutarate). This Methanocaldococcus jannaschii (strain ATCC 43067 / DSM 2661 / JAL-1 / JCM 10045 / NBRC 100440) (Methanococcus jannaschii) protein is L-sulfolactate dehydrogenase (comC).